The primary structure comprises 364 residues: Chorismate synthase (364 aa).

Positions 41–60 (MQHDLDRRRPGTSRYTTARR) are disordered. NADP(+) is bound by residues Arg48 and Arg54. Residues 125–127 (RSS), 238–239 (NA), Gly278, 293–297 (KPTSS), and Arg319 each bind FMN.

Belongs to the chorismate synthase family. In terms of assembly, homotetramer. FMNH2 is required as a cofactor.

It catalyses the reaction 5-O-(1-carboxyvinyl)-3-phosphoshikimate = chorismate + phosphate. Its pathway is metabolic intermediate biosynthesis; chorismate biosynthesis; chorismate from D-erythrose 4-phosphate and phosphoenolpyruvate: step 7/7. Its function is as follows. Catalyzes the anti-1,4-elimination of the C-3 phosphate and the C-6 proR hydrogen from 5-enolpyruvylshikimate-3-phosphate (EPSP) to yield chorismate, which is the branch point compound that serves as the starting substrate for the three terminal pathways of aromatic amino acid biosynthesis. This reaction introduces a second double bond into the aromatic ring system. The polypeptide is Chorismate synthase (Shewanella sp. (strain ANA-3)).